The sequence spans 706 residues: Transmembrane 9 superfamily member 3 (706 aa).

A signal peptide spans 1 to 33 (MRVRPKRSVITLMAIVVVMLILRNQFYSSRTRG). The Lumenal portion of the chain corresponds to 34 to 290 (HGQEPVISSS…LSDEQSIQFH (257 aa)). A helical transmembrane segment spans residues 291–311 (WMSLANSVGIVLSISFITLII). The Cytoplasmic segment spans residues 312–371 (YVRVMYTDKSNSKSPKYMINIEGIETEDDLDDDKYGKYSVYTVAKDWIQNGRPNLFGLKV). The helical transmembrane segment at 372–392 (LILLVSFGVQFLFTIIGSLTI) threads the bilayer. At 393 to 405 (SCSMNKLHNVRNS) the chain is on the lumenal side. A helical membrane pass occupies residues 406-426 (VLTMAILFFVLGAFMASFVGT). The Cytoplasmic portion of the chain corresponds to 427–456 (RLSMVTKTKRTKANYLDDNRYLKDYKKFSP). The chain crosses the membrane as a helical span at residues 457–477 (IFTILCGSSLPGIVMVSTFLL). The Lumenal segment spans residues 478–494 (NSIVWAHDSTSALPFKT). The chain crosses the membrane as a helical span at residues 495 to 515 (IVFFMSIYFIVCIPLSLFGGI). At 516-553 (VANNIPLPQYWLSGITKDESNSDGNGLFVPKSRAKFNP) the chain is on the cytoplasmic side. The chain crosses the membrane as a helical span at residues 554–574 (LVYCGIYLCGIFPLLVIYVEM). Residues 575 to 592 (QYVYKSLWLEKTTFYYFY) are Lumenal-facing. A helical transmembrane segment spans residues 593–613 (GFLFLSIILLCVLTMEISIIG). At 614 to 637 (SYLLMRFCFEDKVVRNNWRWKCFE) the chain is on the cytoplasmic side. Residues 638–658 (MGFSGGVYMELYSLYYIFAVL) traverse the membrane as a helical segment. Topologically, residues 659–665 (NIHGFSS) are lumenal. The helical transmembrane segment at 666–686 (ILISICYSLIFNVMCSLGLGA) threads the bilayer. The Cytoplasmic portion of the chain corresponds to 687-706 (LSYLTASWFINKIYHQKVNL).

This sequence belongs to the nonaspanin (TM9SF) (TC 9.A.2) family.

The protein localises to the golgi apparatus membrane. Functionally, with EMP70 and TMN2, plays a critical role in the late stages of a nutrient-controlled pathway notably regulating FLO11 gene expression. Acts downstream of RAS2 and TOR. Essential for cell adhesion and filamentous growth. May play a role as effector of cellular copper homeostasis. The sequence is that of Transmembrane 9 superfamily member 3 (TMN3) from Saccharomyces cerevisiae (strain ATCC 204508 / S288c) (Baker's yeast).